A 208-amino-acid polypeptide reads, in one-letter code: N-(5'-phosphoribosyl)anthranilate isomerase (208 aa).

This sequence belongs to the TrpF family.

It catalyses the reaction N-(5-phospho-beta-D-ribosyl)anthranilate = 1-(2-carboxyphenylamino)-1-deoxy-D-ribulose 5-phosphate. Its pathway is amino-acid biosynthesis; L-tryptophan biosynthesis; L-tryptophan from chorismate: step 3/5. This is N-(5'-phosphoribosyl)anthranilate isomerase from Neisseria meningitidis serogroup A / serotype 4A (strain DSM 15465 / Z2491).